The following is a 1966-amino-acid chain: Alpha-protein kinase 2 (1966 aa).

6 disordered regions span residues N23–L65, A211–K231, L1211–D1259, S1303–G1365, K1386–K1423, and N1437–P1463. Over residues A211–N227 the composition is skewed to polar residues. Residues L1211–D1221 are compositionally biased toward low complexity. The segment covering S1325–Q1342 has biased composition (basic and acidic residues). Residues Q1388–Q1397 show a composition bias toward basic residues. Residues P1401 to Q1417 show a composition bias toward basic and acidic residues. Positions P1577–S1659 constitute an Ig-like domain. The cysteines at positions 1599 and 1649 are disulfide-linked. The region spanning K1702–L1934 is the Alpha-type protein kinase domain. Residues K1937–S1966 form a disordered region.

It belongs to the protein kinase superfamily. Alpha-type protein kinase family. ALPK subfamily. In terms of tissue distribution, expressed in developing cardiac tissue.

Its subcellular location is the basolateral cell membrane. It carries out the reaction L-seryl-[protein] + ATP = O-phospho-L-seryl-[protein] + ADP + H(+). The catalysed reaction is L-threonyl-[protein] + ATP = O-phospho-L-threonyl-[protein] + ADP + H(+). Protein kinase that recognizes phosphorylation sites in which the surrounding peptides have an alpha-helical conformation. Regulates cardiac development and cardiomyocyte differentiation by negatively regulating Wnt/beta-catenin signaling. This is Alpha-protein kinase 2 (alpk2) from Danio rerio (Zebrafish).